Reading from the N-terminus, the 100-residue chain is Large ribosomal subunit protein bL28 (100 aa).

Belongs to the bacterial ribosomal protein bL28 family.

This Gluconobacter oxydans (strain 621H) (Gluconobacter suboxydans) protein is Large ribosomal subunit protein bL28.